The sequence spans 125 residues: Cu-Zn superoxide dismutase-like protein OPG175 (125 aa).

C52 and C102 are disulfide-bonded.

This sequence belongs to the Cu-Zn superoxide dismutase family.

It localises to the virion. Its subcellular location is the host cytoplasm. Its function is as follows. Superoxide dismutase-like protein with no enzymatic activity. The chain is Cu-Zn superoxide dismutase-like protein OPG175 (OPG175) from Cowpox virus (strain Brighton Red) (CPV).